The sequence spans 462 residues: Glycine--tRNA ligase (462 aa).

Positions 100 and 174 each coordinate substrate. ATP is bound by residues Arg206 to Glu208, Phe216 to Phe221, Glu290 to Leu291, and Gly334 to Arg337. Phe221–Glu225 lines the substrate pocket. Residue Glu330–Gly334 participates in substrate binding.

It belongs to the class-II aminoacyl-tRNA synthetase family. In terms of assembly, homodimer.

Its subcellular location is the cytoplasm. The enzyme catalyses tRNA(Gly) + glycine + ATP = glycyl-tRNA(Gly) + AMP + diphosphate. Catalyzes the attachment of glycine to tRNA(Gly). This Ruminiclostridium cellulolyticum (strain ATCC 35319 / DSM 5812 / JCM 6584 / H10) (Clostridium cellulolyticum) protein is Glycine--tRNA ligase.